Reading from the N-terminus, the 467-residue chain is ATP synthase subunit beta (467 aa).

150–157 (GGAGVGKT) lines the ATP pocket.

The protein belongs to the ATPase alpha/beta chains family. In terms of assembly, F-type ATPases have 2 components, CF(1) - the catalytic core - and CF(0) - the membrane proton channel. CF(1) has five subunits: alpha(3), beta(3), gamma(1), delta(1), epsilon(1). CF(0) has three main subunits: a(1), b(2) and c(9-12). The alpha and beta chains form an alternating ring which encloses part of the gamma chain. CF(1) is attached to CF(0) by a central stalk formed by the gamma and epsilon chains, while a peripheral stalk is formed by the delta and b chains.

The protein resides in the cell inner membrane. The enzyme catalyses ATP + H2O + 4 H(+)(in) = ADP + phosphate + 5 H(+)(out). In terms of biological role, produces ATP from ADP in the presence of a proton gradient across the membrane. The catalytic sites are hosted primarily by the beta subunits. The protein is ATP synthase subunit beta of Aliivibrio fischeri (strain ATCC 700601 / ES114) (Vibrio fischeri).